The primary structure comprises 446 residues: Probable D-serine dehydratase (446 aa).

Lys116 carries the post-translational modification N6-(pyridoxal phosphate)lysine.

Belongs to the serine/threonine dehydratase family. DsdA subfamily. Requires pyridoxal 5'-phosphate as cofactor.

The enzyme catalyses D-serine = pyruvate + NH4(+). The sequence is that of Probable D-serine dehydratase from Bacillus cereus (strain ZK / E33L).